The following is a 159-amino-acid chain: MDLELYDQTTTGAQPEQLQLIRDLIDLAGQTLKLRDDTEVSVTLMNNDAIQKINEQYRGVDRPTDVISFAMHDDDEDDLIVMDPEMAAEMPLNLGDIMISVDKVSEQAAFLNHSEARELGYLVVHGFLHLNGYDHLQPADETEMFTLQRQILDAYGLEK.

Residues histidine 125, histidine 129, and histidine 135 each contribute to the Zn(2+) site.

This sequence belongs to the endoribonuclease YbeY family. The cofactor is Zn(2+).

It is found in the cytoplasm. Its function is as follows. Single strand-specific metallo-endoribonuclease involved in late-stage 70S ribosome quality control and in maturation of the 3' terminus of the 16S rRNA. In Lactiplantibacillus plantarum (strain ATCC BAA-793 / NCIMB 8826 / WCFS1) (Lactobacillus plantarum), this protein is Endoribonuclease YbeY.